Consider the following 329-residue polypeptide: Minor capsid protein A1 (329 aa).

The protein resides in the virion. In terms of biological role, minor capsid protein. This Escherichia coli (Bacteriophage Q-beta) protein is Minor capsid protein A1.